A 351-amino-acid chain; its full sequence is Cell cycle control protein 50B (351 aa).

Topologically, residues 1 to 33 are cytoplasmic; the sequence is MTWSATARGAHQPDNTAFTQQRLPAWQPLLSAS. The helical transmembrane segment at 34 to 54 threads the bilayer; it reads IALPLFFCAGLAFIGLGLGLY. At 55 to 315 the chain is on the exoplasmic loop side; that stretch reads YSSNGIKELE…SISWMGGKNP (261 aa). Residues asparagine 75, asparagine 213, and asparagine 286 are each glycosylated (N-linked (GlcNAc...) asparagine). The helical transmembrane segment at 316-336 threads the bilayer; that stretch reads FLGIAYLVVGSLCILTGFVML. At 337 to 351 the chain is on the cytoplasmic side; the sequence is VVYIRYQDQDDDDEE.

The protein belongs to the CDC50/LEM3 family. In terms of assembly, component of a P4-ATPase flippase complex which consists of a catalytic alpha subunit and an accessory beta subunit. Interacts with alpha subunits ATP8A1, ATP8B1, ATP8B2 and ATP8B4.

The protein resides in the cell membrane. Functionally, accessory component of a P4-ATPase flippase complex which catalyzes the hydrolysis of ATP coupled to the transport of aminophospholipids from the outer to the inner leaflet of various membranes and ensures the maintenance of asymmetric distribution of phospholipids. Phospholipid translocation also seems to be implicated in vesicle formation and in uptake of lipid signaling molecules. The beta subunit may assist in binding of the phospholipid substrate. Can mediate the export of alpha subunits ATP8A1, ATP8B1, ATP8B2 and ATP8B4 from the ER to the plasma membrane. The sequence is that of Cell cycle control protein 50B (TMEM30B) from Homo sapiens (Human).